The following is an 84-amino-acid chain: Small ribosomal subunit protein uS15 (84 aa).

This sequence belongs to the universal ribosomal protein uS15 family. As to quaternary structure, part of the 30S ribosomal subunit. Forms a bridge to the 50S subunit in the 70S ribosome, contacting the 23S rRNA.

In terms of biological role, one of the primary rRNA binding proteins, it binds directly to 16S rRNA where it helps nucleate assembly of the platform of the 30S subunit by binding and bridging several RNA helices of the 16S rRNA. Forms an intersubunit bridge (bridge B4) with the 23S rRNA of the 50S subunit in the ribosome. In Thermosipho melanesiensis (strain DSM 12029 / CIP 104789 / BI429), this protein is Small ribosomal subunit protein uS15.